The primary structure comprises 293 residues: ATP synthase subunit a (293 aa).

6 helical membrane-spanning segments follow: residues 40–60 (DSLF…WLAA), 97–117 (LFVA…NALD), 151–171 (DLNV…YYGI), 188–208 (FHAH…LNLI), 225–245 (MFAG…WTGF), and 264–284 (AIFH…LTLV).

Belongs to the ATPase A chain family. In terms of assembly, F-type ATPases have 2 components, CF(1) - the catalytic core - and CF(0) - the membrane proton channel. CF(1) has five subunits: alpha(3), beta(3), gamma(1), delta(1), epsilon(1). CF(0) has three main subunits: a(1), b(2) and c(9-12). The alpha and beta chains form an alternating ring which encloses part of the gamma chain. CF(1) is attached to CF(0) by a central stalk formed by the gamma and epsilon chains, while a peripheral stalk is formed by the delta and b chains.

It is found in the cell inner membrane. Functionally, key component of the proton channel; it plays a direct role in the translocation of protons across the membrane. The protein is ATP synthase subunit a of Bordetella bronchiseptica (strain ATCC BAA-588 / NCTC 13252 / RB50) (Alcaligenes bronchisepticus).